The sequence spans 340 residues: MAELYYDNQADLNRLKNKPIAIIGFGSQGHAHARNLADSGLDVRVGLYPGSKSWAKVEAAGLKVMTVAEAAREAQIVMILTPDIGQADLYREHIAPAMEPGKTLMFAHGFNIRFGQIIPPQGIDVSMVAPKAPGHRVREVFVQGGGVPALIAVEQDATGGAFEDALAYAKGLGCTRAGVLRTTFAEETETDLFGEQVVLCGGVSALVKAAFETLVEAGYQPEVAYFECMHELKLIVDLFYQGGLNYMRYSVSDTAEWGDYTAGPKIITDQTRAAMRQILADIQSGAFAEDWIDENHNGRPRFNAYRQADINHPIEQIGRELRRMMPFVNPREVKPGEGGA.

The KARI N-terminal Rossmann domain occupies 2–182; the sequence is AELYYDNQAD…GCTRAGVLRT (181 aa). Residues 25–28, Ser-51, Ser-53, and 83–86 each bind NADP(+); these read FGSQ and DIGQ. Residue His-108 is part of the active site. Gly-134 lines the NADP(+) pocket. A KARI C-terminal knotted domain is found at 183–328; the sequence is TFAEETETDL…RELRRMMPFV (146 aa). Mg(2+) contacts are provided by Asp-191, Glu-195, Glu-227, and Glu-231. A substrate-binding site is contributed by Ser-252.

It belongs to the ketol-acid reductoisomerase family. Mg(2+) is required as a cofactor.

The catalysed reaction is (2R)-2,3-dihydroxy-3-methylbutanoate + NADP(+) = (2S)-2-acetolactate + NADPH + H(+). It carries out the reaction (2R,3R)-2,3-dihydroxy-3-methylpentanoate + NADP(+) = (S)-2-ethyl-2-hydroxy-3-oxobutanoate + NADPH + H(+). It participates in amino-acid biosynthesis; L-isoleucine biosynthesis; L-isoleucine from 2-oxobutanoate: step 2/4. The protein operates within amino-acid biosynthesis; L-valine biosynthesis; L-valine from pyruvate: step 2/4. In terms of biological role, involved in the biosynthesis of branched-chain amino acids (BCAA). Catalyzes an alkyl-migration followed by a ketol-acid reduction of (S)-2-acetolactate (S2AL) to yield (R)-2,3-dihydroxy-isovalerate. In the isomerase reaction, S2AL is rearranged via a Mg-dependent methyl migration to produce 3-hydroxy-3-methyl-2-ketobutyrate (HMKB). In the reductase reaction, this 2-ketoacid undergoes a metal-dependent reduction by NADPH to yield (R)-2,3-dihydroxy-isovalerate. The protein is Ketol-acid reductoisomerase (NADP(+)) of Chloroflexus aurantiacus (strain ATCC 29366 / DSM 635 / J-10-fl).